A 304-amino-acid polypeptide reads, in one-letter code: MAHYHNDYQKNDEVEFVRTGYGKDMVKVLHIQRDGKYHSIKEVATSVQLTLNSRREYLHGDNSDIIPTDTIKNTVQVLAKFKGIKSIETFAMNICEHFLSSFNHVIRVQVYVEEVPWKRFEKNGVKHVHAFIHTPTGTHFCEVEQLRSGPPVIHSGIKDLKVLKTTQSGFEGFLKDQFTTLPEVKDRCFATQVYCKWRYHQGRDVDFEATWEAVRGIVLKKFAGPYDKGEYSPSVQKTLYDIQVLSLSQLPEIEDMEISLPNIHYFNIDMSKMGLINKEEVLLPLDNPYGRITGTVKRKLTSRL.

An N-acetylalanine modification is found at alanine 2. Residues lysine 10 and lysine 23 each carry the N6-acetyllysine; alternate modification. An N6-succinyllysine; alternate mark is found at lysine 10 and lysine 23. Catalysis depends on lysine 23, which acts as the Charge relay system. N6-acetyllysine is present on residues lysine 27 and lysine 36. Phosphoserine is present on residues serine 39 and serine 63. Threonine 68 functions as the Charge relay system in the catalytic mechanism. 2 residues coordinate urate: threonine 68 and aspartate 69. N6-acetyllysine is present on residues lysine 118, lysine 122, and lysine 164. Residue phenylalanine 170 participates in urate binding. Lysine 175 and lysine 185 each carry N6-acetyllysine. Arginine 187 contributes to the urate binding site. N6-acetyllysine; alternate is present on residues lysine 221 and lysine 228. Lysine 221 and lysine 228 each carry N6-succinyllysine; alternate. Residue serine 232 is modified to Phosphoserine. Positions 235, 236, and 262 each coordinate urate. Histidine 264 (charge relay system) is an active-site residue. Lysine 278 bears the N6-acetyllysine mark. Phosphotyrosine is present on tyrosine 289. The short motif at 302-304 is the Microbody targeting signal element; sequence SRL.

The protein belongs to the uricase family. In terms of assembly, homotetramer.

The protein resides in the peroxisome. The catalysed reaction is urate + O2 + H2O = 5-hydroxyisourate + H2O2. Its pathway is purine metabolism; urate degradation; (S)-allantoin from urate: step 1/3. Functionally, catalyzes the oxidation of uric acid to 5-hydroxyisourate, which is further processed to form (S)-allantoin. This Bos taurus (Bovine) protein is Uricase (UOX).